The primary structure comprises 344 residues: Phenylalanine--tRNA ligase alpha subunit (344 aa).

Glutamate 256 serves as a coordination point for Mg(2+).

This sequence belongs to the class-II aminoacyl-tRNA synthetase family. Phe-tRNA synthetase alpha subunit type 1 subfamily. In terms of assembly, tetramer of two alpha and two beta subunits. Requires Mg(2+) as cofactor.

It localises to the cytoplasm. The catalysed reaction is tRNA(Phe) + L-phenylalanine + ATP = L-phenylalanyl-tRNA(Phe) + AMP + diphosphate + H(+). This chain is Phenylalanine--tRNA ligase alpha subunit, found in Oceanobacillus iheyensis (strain DSM 14371 / CIP 107618 / JCM 11309 / KCTC 3954 / HTE831).